A 374-amino-acid polypeptide reads, in one-letter code: MSDNSQKKVIVGMSGGVDSSVSAYLLQQQGYQVEGLFMKNWEEDDNEEYCTAAEDLADAQAVCDKLGIHLHTINFAAEYWDNVFEYFLEEYKAGRTPNPDILCNKEIKFKAFLEFADEVLDADFIAMGHYVRRTFPTAEEIANGIKPQMLRGLDSNKDQSYFLYTLSSEQVARSLFPVGELEKPEVRRIAEEQGLITAKKKDSTGICFIGERKFTEFLGKYLPAQPGNIETPEGKVIGQHQGLMYHTLGQRKGLHIGGTKGGGGNEDPWFVGEKDLKRNVLIAVQGKDHPLLKSQGLLASQLHWVDRTPIKAPLSCTVKTRYRQTDIPCTIIPVDDENIKVIFDEPQIAVTPGQSAVFYLDEVCLGGGIIEERI.

Residues 12-19 (GMSGGVDS) and M38 contribute to the ATP site. The interaction with target base in tRNA stretch occupies residues 98–100 (NPD). Catalysis depends on C103, which acts as the Nucleophile. C103 and C207 are oxidised to a cystine. G128 serves as a coordination point for ATP. The segment at 157-159 (KDQ) is interaction with tRNA. The Cysteine persulfide intermediate role is filled by C207. An interaction with tRNA region spans residues 321-322 (RY).

This sequence belongs to the MnmA/TRMU family.

The protein localises to the cytoplasm. It catalyses the reaction S-sulfanyl-L-cysteinyl-[protein] + uridine(34) in tRNA + AH2 + ATP = 2-thiouridine(34) in tRNA + L-cysteinyl-[protein] + A + AMP + diphosphate + H(+). In terms of biological role, catalyzes the 2-thiolation of uridine at the wobble position (U34) of tRNA, leading to the formation of s(2)U34. In Aliivibrio fischeri (strain ATCC 700601 / ES114) (Vibrio fischeri), this protein is tRNA-specific 2-thiouridylase MnmA.